A 437-amino-acid chain; its full sequence is 3-phosphoshikimate 1-carboxyvinyltransferase (437 aa).

3-phosphoshikimate contacts are provided by Lys28, Ser29, and Arg33. Position 28 (Lys28) interacts with phosphoenolpyruvate. Phosphoenolpyruvate is bound by residues Gly97 and Arg125. The 3-phosphoshikimate site is built by Ser168, Ser169, Gln170, Glu316, and His343. Gln170 lines the phosphoenolpyruvate pocket. The active-site Proton acceptor is the Glu316. Positions 347, 388, and 413 each coordinate phosphoenolpyruvate.

This sequence belongs to the EPSP synthase family. Monomer.

It localises to the cytoplasm. It catalyses the reaction 3-phosphoshikimate + phosphoenolpyruvate = 5-O-(1-carboxyvinyl)-3-phosphoshikimate + phosphate. It participates in metabolic intermediate biosynthesis; chorismate biosynthesis; chorismate from D-erythrose 4-phosphate and phosphoenolpyruvate: step 6/7. Catalyzes the transfer of the enolpyruvyl moiety of phosphoenolpyruvate (PEP) to the 5-hydroxyl of shikimate-3-phosphate (S3P) to produce enolpyruvyl shikimate-3-phosphate and inorganic phosphate. In Rhodococcus erythropolis (strain PR4 / NBRC 100887), this protein is 3-phosphoshikimate 1-carboxyvinyltransferase.